The following is a 489-amino-acid chain: MAAHGGSAASSALKGLIQQFTTITGASESVGKHMLEACNNNLEMAVTMFLDGGGIAEEPSTSSASVSTVRPHTEEEVRAPIPQKQEILVEPEPLFGAPKRRRPARSIFDGFRDFQTETIRQEQELRNGGAIDKKLTTLADLFRPPIDLMHKGSFETAKECGQMQNKWLMINIQNVQDFACQCLNRDVWSNEAVKNIIREHFIFWQVYHDSEEGQRYIQFYKLGDFPYVSILDPRTGQKLVEWHQLDVSSFLDQVTGFLGEHGQLDGLSSSPPKKCARSESLIDASEDSQLEAAIRASLQETHFDSTQTKQDSRSDEESESELFSGSEEFISVCGSDEEEEVENLAKSRKSPHKDLGHRKEENRRPLTEPPVRTDPGTATNHQGLPAVDSEILEMPPEKADGVVEGIDVNGPKAQLMLRYPDGKREQITLPEQAKLLALVKHVQSKGYPNERFELLTNFPRRKLSHLDYDITLQEAGLCPQETVFVQERN.

A2 carries the post-translational modification N-acetylalanine. Residues A2–G54 enclose the UBA domain. The interval A56–V77 is disordered. Residues P59–R70 show a composition bias toward polar residues. K84 participates in a covalent cross-link: Glycyl lysine isopeptide (Lys-Gly) (interchain with G-Cter in SUMO2). K99 participates in a covalent cross-link: Glycyl lysine isopeptide (Lys-Gly) (interchain with G-Cter in ubiquitin). A Glycyl lysine isopeptide (Lys-Gly) (interchain with G-Cter in SUMO2) cross-link involves residue K134. Phosphoserine occurs at positions 278, 280, 285, and 288. In terms of domain architecture, UIM spans S285–D304. Over residues E300–K309 the composition is skewed to polar residues. Positions E300–L384 are disordered. Position 306 is a phosphothreonine (T306). A compositionally biased stretch (basic and acidic residues) spans H352–L366. The UBX domain maps to V408 to V485.

As to quaternary structure, interacts with neddylated CUL2, ubiquitinated HIF1A, and VCP/p97.

The protein localises to the nucleus. Functionally, ubiquitin-binding adapter that links a subset of NEDD8-associated cullin ring ligases (CRLs) to the segregase VCP/p97, to regulate turnover of their ubiquitination substrates. This chain is UBX domain-containing protein 7 (UBXN7), found in Homo sapiens (Human).